The chain runs to 149 residues: Transcriptional regulator MraZ (149 aa).

SpoVT-AbrB domains follow at residues 7 to 54 (KYVN…GISH) and 83 to 126 (ALQL…QPQN).

Belongs to the MraZ family. Forms oligomers.

The protein localises to the cytoplasm. It localises to the nucleoid. This is Transcriptional regulator MraZ from Rickettsia canadensis (strain McKiel).